A 240-amino-acid polypeptide reads, in one-letter code: Agamous-like MADS-box protein AGL16 (240 aa).

The MADS-box domain occupies 1-61 (MGRGKIAIKR…GRLYDFSSSS (61 aa)). The region spanning 86 to 176 (IQFWQKEAAI…HKKVNLMHQQ (91 aa)) is the K-box domain.

Homodimer. Interacts with AGL15, AGL24, AP1, AGL6, AG, AGL1, AGL11, AGL5, SEP3, SEP1, AGL63, AGL14, SOC1 and AGL21. Interacts with AGL63. Interacts with SVP. As to expression, expressed at high levels in leaves, moderate levels in roots, seedlings and stems, and at low levels in flowers, pollen and siliques. Accumulates in leaf guard cells and trichomes. Also present in epidermal cells of roots. Expressed in mature guard cells.

The protein resides in the nucleus. In terms of biological role, probable transcription factor involved in the regulation of flowering time in long-day photoperiod. Participates in the repression of FT expression and floral transition, by interacting closely with the FLC-SVP pathways. Functions in the satellite meristemoid lineage of stomatal development. The sequence is that of Agamous-like MADS-box protein AGL16 (AGL16) from Arabidopsis thaliana (Mouse-ear cress).